Consider the following 287-residue polypeptide: Pol-RFamide neuropeptides (287 aa).

The first 21 residues, 1–21, serve as a signal peptide directing secretion; the sequence is MNLITLLVLGVSTCLIYGIEA. The propeptide occupies 22 to 52; it reads DEKTSSALENEIVEILNGNFKNEKKSIETSD. Position 53 is a pyrrolidone carboxylic acid (glutamine 53). Residue phenylalanine 59 is modified to Phenylalanine amide. Residues 62–64 constitute a propeptide that is removed on maturation; the sequence is EVN. A Pyrrolidone carboxylic acid modification is found at glutamine 65. Position 71 is a phenylalanine amide (phenylalanine 71). Residues 74 to 77 constitute a propeptide that is removed on maturation; sequence ELSD. Glutamine 78 is modified (pyrrolidone carboxylic acid). Residue phenylalanine 84 is modified to Phenylalanine amide. The propeptide occupies 87-90; that stretch reads ELSD. Glutamine 91 is modified (pyrrolidone carboxylic acid). A Phenylalanine amide modification is found at phenylalanine 97. The propeptide occupies 100 to 103; it reads EVLD. Residue glutamine 104 is modified to Pyrrolidone carboxylic acid. Phenylalanine amide is present on phenylalanine 110. The propeptide occupies 113–116; the sequence is DASN. Glutamine 117 carries the pyrrolidone carboxylic acid modification. Phenylalanine 123 bears the Phenylalanine amide mark. A propeptide spanning residues 126-129 is cleaved from the precursor; it reads ELSD. Glutamine 130 carries the post-translational modification Pyrrolidone carboxylic acid. Residue phenylalanine 136 is modified to Phenylalanine amide. Residues 139-142 constitute a propeptide that is removed on maturation; the sequence is EGSN. Glutamine 143 bears the Pyrrolidone carboxylic acid mark. Phenylalanine 149 is modified (phenylalanine amide). A propeptide spanning residues 152-168 is cleaved from the precursor; the sequence is EASKNDLEKQNGRGDSD. Glutamine 169 is subject to Pyrrolidone carboxylic acid. Phenylalanine 175 is modified (phenylalanine amide). Residues 178-181 constitute a propeptide that is removed on maturation; sequence EARK. Residue glutamine 182 is modified to Pyrrolidone carboxylic acid. Phenylalanine 188 is modified (phenylalanine amide). A propeptide spanning residues 192 to 194 is cleaved from the precursor; the sequence is DMN. Position 195 is a pyrrolidone carboxylic acid (glutamine 195). Histidine 201 carries the post-translational modification Histidine amide. Positions 204–207 are excised as a propeptide; it reads ETSD. Pyrrolidone carboxylic acid is present on glutamine 208. Phenylalanine 214 carries the phenylalanine amide modification. A propeptide spanning residues 217-220 is cleaved from the precursor; sequence QLSD. Glutamine 221 is modified (pyrrolidone carboxylic acid). Phenylalanine 227 is modified (phenylalanine amide). The tract at residues 229-267 is disordered; sequence REVKNDKNNPFRSRYTGDSTQLQRENNQPIEELRDNTEK. Positions 230–287 are excised as a propeptide; that stretch reads EVKNDKNNPFRSRYTGDSTQLQRENNQPIEELRDNTEKVSIENKPIMKKTSVKISKTV. A compositionally biased stretch (polar residues) spans 238 to 257; the sequence is PFRSRYTGDSTQLQRENNQP.

It belongs to the FARP (FMRFamide related peptide) family. Post-translationally, the N-terminal processing sites of the Pol-RFamide peptides are acidic suggesting that cniderian nervous systems may use a variety of unconventional processing procedures.

Its subcellular location is the secreted. In terms of biological role, has direct action on motoneurons, and effect includes transient inhibition followed by prolonged excitation. The chain is Pol-RFamide neuropeptides from Polyorchis penicillatus (Hydromedusa).